The following is a 659-amino-acid chain: Beta-galactosidase BgaA (659 aa).

Arg103 serves as a coordination point for substrate. Cys107 is a binding site for Zn(2+). Asn141 provides a ligand contact to substrate. Glu142 (proton donor) is an active-site residue. Residues Cys148, Cys150, and Cys153 each contribute to the Zn(2+) site. Catalysis depends on Glu298, which acts as the Nucleophile. Trp307 is a binding site for substrate.

This sequence belongs to the glycosyl hydrolase 42 family. As to quaternary structure, dimer.

The enzyme catalyses Hydrolysis of terminal non-reducing beta-D-galactose residues in beta-D-galactosides.. Its activity is regulated as follows. Inhibited by Cu(2+), Hg(2+) and Zn(2+). No effect with Ca(2+), Mg(2+), Mn(2+) or excess EDTA (10 mM). Its function is as follows. Involved in plant cell wall degradation in cooperation with cellulosome. Hydrolyzes both p-nitrophenyl-alpha-L-arabinopyranoside (pNPAp) and p-nitrophenyl-beta-D-galactopyranoside (pNPGp), with higher activity for pNPAp. Shows hydrolysis activity against p-nitrophenyl-beta-D-fucopyranoside (pNPFp), but not against p-nitrophenyl-alpha-L-arabinofuranoside (pNPAf), o-nitrophenyl-beta-D-galactopyranoside (oNPGp), p-nitrophenyl-beta-D-xylopyranoside (pNPXp), p-nitrophenyl-beta-D-glucopyranoside (pNPGLp), p-nitrophenyl-beta-D-cellobiopyranoside (pNPCp), p-nitrophenyl-beta-lactopyranoside (pNPLp) or p-nitrophenyl-alpha-galactopyranoside (pNPalphaGp). No detectable activity against arabinan or arabinoxylan, but activity against arabinogalactan can be detected. Increases degradation activity of alpha-L-arabinofuranosidase (ArfA) and endo-1,4-beta-xylanase (XynA) when corn fiber gum and corn stem powder are used as substrates. In Clostridium cellulovorans (strain ATCC 35296 / DSM 3052 / OCM 3 / 743B), this protein is Beta-galactosidase BgaA (bgaA).